A 200-amino-acid chain; its full sequence is Ephrin-A2 (200 aa).

The first 22 residues, 1-22, serve as a signal peptide directing secretion; sequence MPRWEAAALLAAIVGVCVWSDD. The 134-residue stretch at 28–161 folds into the Ephrin RBD domain; the sequence is SDRYAVYWNR…KLKVYVRPTN (134 aa). Asparagine 36 is a glycosylation site (N-linked (GlcNAc...) asparagine). 2 disulfides stabilise this stretch: cysteine 61-cysteine 101 and cysteine 89-cysteine 150. N-linked (GlcNAc...) asparagine glycosylation is found at asparagine 161 and asparagine 175. A lipid anchor (GPI-anchor amidated asparagine) is attached at asparagine 175. The propeptide at 176–200 is removed in mature form; the sequence is NSCCSLAVPRAVLVAAPVFWTLLGS.

This sequence belongs to the ephrin family. As to quaternary structure, binds to the receptor tyrosine kinases EPHA3, EPHA4 and EPHA5. Interacts with EPHA8; activates EPHA8. Expressed in a gradient across the tectum being more strongly expressed at the posterior pole.

It localises to the cell membrane. Functionally, cell surface GPI-bound ligand for Eph receptors, a family of receptor tyrosine kinases which are crucial for migration, repulsion and adhesion during neuronal, vascular and epithelial development. Binds promiscuously Eph receptors residing on adjacent cells, leading to contact-dependent bidirectional signaling into neighboring cells. The signaling pathway downstream of the receptor is referred to as forward signaling while the signaling pathway downstream of the ephrin ligand is referred to as reverse signaling. With the EPHA2 receptor may play a role in bone remodeling through regulation of osteoclastogenesis and osteoblastogenesis. The protein is Ephrin-A2 (EFNA2) of Gallus gallus (Chicken).